The sequence spans 301 residues: Glycine--tRNA ligase alpha subunit (301 aa).

It belongs to the class-II aminoacyl-tRNA synthetase family. Tetramer of two alpha and two beta subunits.

It localises to the cytoplasm. It catalyses the reaction tRNA(Gly) + glycine + ATP = glycyl-tRNA(Gly) + AMP + diphosphate. The protein is Glycine--tRNA ligase alpha subunit of Shewanella denitrificans (strain OS217 / ATCC BAA-1090 / DSM 15013).